The primary structure comprises 401 residues: S-adenosylmethionine synthase (401 aa).

136-141 is a binding site for ATP; that stretch reads GQGSVD.

The protein belongs to the AdoMet synthase 2 family. It depends on Mg(2+) as a cofactor.

The catalysed reaction is L-methionine + ATP + H2O = S-adenosyl-L-methionine + phosphate + diphosphate. It participates in amino-acid biosynthesis; S-adenosyl-L-methionine biosynthesis; S-adenosyl-L-methionine from L-methionine: step 1/1. Its function is as follows. Catalyzes the formation of S-adenosylmethionine from methionine and ATP. In Pyrococcus abyssi (strain GE5 / Orsay), this protein is S-adenosylmethionine synthase (mat).